The chain runs to 417 residues: NADH-quinone oxidoreductase subunit D (417 aa).

It belongs to the complex I 49 kDa subunit family. In terms of assembly, NDH-1 is composed of 14 different subunits. Subunits NuoB, C, D, E, F, and G constitute the peripheral sector of the complex.

Its subcellular location is the cell inner membrane. It carries out the reaction a quinone + NADH + 5 H(+)(in) = a quinol + NAD(+) + 4 H(+)(out). NDH-1 shuttles electrons from NADH, via FMN and iron-sulfur (Fe-S) centers, to quinones in the respiratory chain. The immediate electron acceptor for the enzyme in this species is believed to be ubiquinone. Couples the redox reaction to proton translocation (for every two electrons transferred, four hydrogen ions are translocated across the cytoplasmic membrane), and thus conserves the redox energy in a proton gradient. This chain is NADH-quinone oxidoreductase subunit D, found in Coxiella burnetii (strain CbuG_Q212) (Coxiella burnetii (strain Q212)).